Consider the following 505-residue polypeptide: Adenylosuccinate synthetase, chloroplastic (505 aa).

A chloroplast-targeting transit peptide spans 1 to 60; the sequence is MTTMNISTLRLDSNPITTSTKSTTHRSGALGYNGSYSCRLLQFQKKNKAPSIIVCSTKPL. GTP-binding positions include 92-98 and 120-122; these read GDEGKGK and GHT. Residue Asp93 is the Proton acceptor of the active site. Asp93 and Gly120 together coordinate Mg(2+). IMP is bound by residues 93-96, 118-121, Thr210, Arg224, Gln304, Thr319, and Arg383; these read DEGK and NAGH. Residue His121 is the Proton donor of the active site. Residue 379 to 385 participates in substrate binding; it reads TTTGRPR. Residues Arg385, 411–413, and 494–496 each bind GTP; these read KLD and GVG.

It belongs to the adenylosuccinate synthetase family. Homodimer. Mg(2+) is required as a cofactor.

It is found in the plastid. Its subcellular location is the chloroplast. The catalysed reaction is IMP + L-aspartate + GTP = N(6)-(1,2-dicarboxyethyl)-AMP + GDP + phosphate + 2 H(+). It participates in purine metabolism; AMP biosynthesis via de novo pathway; AMP from IMP: step 1/2. In terms of biological role, plays an important role in the de novo pathway and in the salvage pathway of purine nucleotide biosynthesis. Catalyzes the first committed step in the biosynthesis of AMP from IMP. The polypeptide is Adenylosuccinate synthetase, chloroplastic (Nicotiana tabacum (Common tobacco)).